A 121-amino-acid chain; its full sequence is Large ribosomal subunit protein bL12 (121 aa).

This sequence belongs to the bacterial ribosomal protein bL12 family. In terms of assembly, homodimer. Part of the ribosomal stalk of the 50S ribosomal subunit. Forms a multimeric L10(L12)X complex, where L10 forms an elongated spine to which 2 to 4 L12 dimers bind in a sequential fashion. Binds GTP-bound translation factors.

In terms of biological role, forms part of the ribosomal stalk which helps the ribosome interact with GTP-bound translation factors. Is thus essential for accurate translation. The protein is Large ribosomal subunit protein bL12 of Clostridium beijerinckii (strain ATCC 51743 / NCIMB 8052) (Clostridium acetobutylicum).